Reading from the N-terminus, the 591-residue chain is V-type ATP synthase alpha chain (591 aa).

242–249 lines the ATP pocket; it reads GPFGAGKT.

It belongs to the ATPase alpha/beta chains family.

The enzyme catalyses ATP + H2O + 4 H(+)(in) = ADP + phosphate + 5 H(+)(out). Produces ATP from ADP in the presence of a proton gradient across the membrane. The V-type alpha chain is a catalytic subunit. The protein is V-type ATP synthase alpha chain (atpA) of Chlamydia muridarum (strain MoPn / Nigg).